The sequence spans 187 residues: Flavin prenyltransferase UbiX (187 aa).

Residues 9 to 11, Ser-34, and Arg-123 contribute to the FMN site; that span reads GAS. Tyr-153 and Lys-169 together coordinate dimethylallyl phosphate.

It belongs to the UbiX/PAD1 family.

The catalysed reaction is dimethylallyl phosphate + FMNH2 = prenylated FMNH2 + phosphate. Flavin prenyltransferase that catalyzes the synthesis of the prenylated FMN cofactor (prenyl-FMN) for 4-hydroxy-3-polyprenylbenzoic acid decarboxylase UbiD. The prenyltransferase is metal-independent and links a dimethylallyl moiety from dimethylallyl monophosphate (DMAP) to the flavin N5 and C6 atoms of FMN. This Helicobacter pylori (strain ATCC 700392 / 26695) (Campylobacter pylori) protein is Flavin prenyltransferase UbiX.